The following is a 610-amino-acid chain: Glutamine--fructose-6-phosphate aminotransferase [isomerizing] (610 aa).

Residue Cys2 is the Nucleophile; for GATase activity of the active site. The 217-residue stretch at 2-218 folds into the Glutamine amidotransferase type-2 domain; the sequence is CGIVGAVAQR…EGDVAEITRR (217 aa). 2 consecutive SIS domains span residues 286 to 426 and 459 to 600; these read AADI…EQGR and LATD…VDQP. Lys605 serves as the catalytic For Fru-6P isomerization activity.

Homodimer.

The protein resides in the cytoplasm. The catalysed reaction is D-fructose 6-phosphate + L-glutamine = D-glucosamine 6-phosphate + L-glutamate. Functionally, catalyzes the first step in hexosamine metabolism, converting fructose-6P into glucosamine-6P using glutamine as a nitrogen source. In Vibrio parahaemolyticus serotype O3:K6 (strain RIMD 2210633), this protein is Glutamine--fructose-6-phosphate aminotransferase [isomerizing].